A 217-amino-acid polypeptide reads, in one-letter code: MTPLTTGWHPALSPRAEEGDTPPSRFDDHLAAQLLAQRIVLLGTQVDEVSANRVCAQLLLLSAEDSRTDISLYINSPGGSVTAGLAIYDTMRLIPNDVSTLAMGFAASMGQFLLSVGAAGKRFALPNARIMMHQPSAGIGGTTADIEIQAENLEFTKKAIERITAEHTGQSEETISRDGDRDRWFTAEQAKEYGMVDRVVESLDDVRPTASRRRMGL.

The interval 1 to 24 (MTPLTTGWHPALSPRAEEGDTPPS) is disordered. The active-site Nucleophile is Ser-108. The active site involves His-133.

Belongs to the peptidase S14 family. As to quaternary structure, fourteen ClpP subunits assemble into 2 heptameric rings which stack back to back to give a disk-like structure with a central cavity, resembling the structure of eukaryotic proteasomes.

It is found in the cytoplasm. The enzyme catalyses Hydrolysis of proteins to small peptides in the presence of ATP and magnesium. alpha-casein is the usual test substrate. In the absence of ATP, only oligopeptides shorter than five residues are hydrolyzed (such as succinyl-Leu-Tyr-|-NHMec, and Leu-Tyr-Leu-|-Tyr-Trp, in which cleavage of the -Tyr-|-Leu- and -Tyr-|-Trp bonds also occurs).. Its function is as follows. Cleaves peptides in various proteins in a process that requires ATP hydrolysis. Has a chymotrypsin-like activity. Plays a major role in the degradation of misfolded proteins. The protein is ATP-dependent Clp protease proteolytic subunit 1 of Streptomyces avermitilis (strain ATCC 31267 / DSM 46492 / JCM 5070 / NBRC 14893 / NCIMB 12804 / NRRL 8165 / MA-4680).